A 171-amino-acid polypeptide reads, in one-letter code: Ribosome maturation factor RimM (171 aa).

A PRC barrel domain is found at 96–168 (EDGFYDHELE…TATITPPEGL (73 aa)).

The protein belongs to the RimM family. As to quaternary structure, binds ribosomal protein uS19.

It is found in the cytoplasm. Functionally, an accessory protein needed during the final step in the assembly of 30S ribosomal subunit, possibly for assembly of the head region. Essential for efficient processing of 16S rRNA. May be needed both before and after RbfA during the maturation of 16S rRNA. It has affinity for free ribosomal 30S subunits but not for 70S ribosomes. This Corynebacterium glutamicum (strain ATCC 13032 / DSM 20300 / JCM 1318 / BCRC 11384 / CCUG 27702 / LMG 3730 / NBRC 12168 / NCIMB 10025 / NRRL B-2784 / 534) protein is Ribosome maturation factor RimM.